A 274-amino-acid chain; its full sequence is tRNA-cytidine(32) 2-sulfurtransferase (274 aa).

Positions Ser-40–Ser-45 match the PP-loop motif motif. Residues Cys-115, Cys-118, and Cys-206 each contribute to the [4Fe-4S] cluster site.

The protein belongs to the TtcA family. As to quaternary structure, homodimer. The cofactor is Mg(2+). It depends on [4Fe-4S] cluster as a cofactor.

Its subcellular location is the cytoplasm. It catalyses the reaction cytidine(32) in tRNA + S-sulfanyl-L-cysteinyl-[cysteine desulfurase] + AH2 + ATP = 2-thiocytidine(32) in tRNA + L-cysteinyl-[cysteine desulfurase] + A + AMP + diphosphate + H(+). Its pathway is tRNA modification. Its function is as follows. Catalyzes the ATP-dependent 2-thiolation of cytidine in position 32 of tRNA, to form 2-thiocytidine (s(2)C32). The sulfur atoms are provided by the cysteine/cysteine desulfurase (IscS) system. This is tRNA-cytidine(32) 2-sulfurtransferase from Pseudomonas paraeruginosa (strain DSM 24068 / PA7) (Pseudomonas aeruginosa (strain PA7)).